Consider the following 1783-residue polypeptide: Doublecortin domain-containing protein 1 (1783 aa).

Positions 93–133 are disordered; that stretch reads GLQDCSTHQTASDHSHDEISDLDSYKSNSKNNSCSISASKR. Positions 117–131 are enriched in low complexity; it reads YKSNSKNNSCSISAS. Positions 168–252 constitute a Doublecortin 1 domain; it reads KLQPRVIKVT…FLNPFKKIKD (85 aa). Positions 702-800 constitute a Ricin B-type lectin 1 domain; sequence WLITKTGMIL…HIHHGAWTTA (99 aa). The interval 860 to 880 is disordered; that stretch reads ASAQRWAIKHEGTSKPGQWKH. The region spanning 925–1015 is the Doublecortin 2 domain; it reads PICKTTEPYA…ELWINPDLSI (91 aa). The region spanning 1151 to 1266 is the Ricin B-type lectin 2 domain; sequence SCSPKHSKLH…GAANQKWHYM (116 aa).

In terms of assembly, interacts with dynein intermediate chain, tubulin, RAB8A, RAB3IP, NUDC, PAFAH1B1 and DCTN1.

It is found in the midbody. Its subcellular location is the midbody ring. The protein resides in the cytoplasm. It localises to the cytoskeleton. The protein localises to the spindle. Functionally, microtubule-binding protein which plays an important role in mediating dynein-dependent transport of RAB8A-positive vesicles to the midbody during cytokinesis. The polypeptide is Doublecortin domain-containing protein 1 (Homo sapiens (Human)).